Reading from the N-terminus, the 179-residue chain is MSLKDRFDRFIDYFTEDEDSTVPYEKGNEPVFTPVNSSQEPDLPMNQPSQSAGAKDSNITRLHARQQELANQSQRSTDKVIIDVRYPRKYEDATEIVDLLAGNESILIDFQYMTEVQARRCLDYLDGACHVLAGNLKKVASTMYLLTPVNVIVNVEDIRLPDEEQNGEFGFDMKRNRVR.

The tract at residues 18-57 (EDSTVPYEKGNEPVFTPVNSSQEPDLPMNQPSQSAGAKDS) is disordered. The span at 34 to 57 (PVNSSQEPDLPMNQPSQSAGAKDS) shows a compositional bias: polar residues.

This sequence belongs to the SepF family. Homodimer. Interacts with FtsZ.

The protein resides in the cytoplasm. Cell division protein that is part of the divisome complex and is recruited early to the Z-ring. Probably stimulates Z-ring formation, perhaps through the cross-linking of FtsZ protofilaments. Its function overlaps with FtsA. The sequence is that of Cell division protein SepF from Streptococcus pneumoniae (strain Hungary19A-6).